The primary structure comprises 247 residues: Serine protease 1 (247 aa).

Residues 1–15 (MNPLLILTFVAAALA) form the signal peptide. Residues 16 to 23 (APFDDDDK) constitute a propeptide, activation peptide. One can recognise a Peptidase S1 domain in the interval 24–244 (IVGGYNCEEN…YVKWIKNTIA (221 aa)). 5 disulfides stabilise this stretch: cysteine 30–cysteine 160, cysteine 48–cysteine 64, cysteine 139–cysteine 206, cysteine 171–cysteine 185, and cysteine 196–cysteine 220. Histidine 63 acts as the Charge relay system in catalysis. The Ca(2+) site is built by glutamate 75, asparagine 77, valine 80, and glutamate 85. The active-site Charge relay system is aspartate 107. A Sulfotyrosine modification is found at tyrosine 154. Residue serine 200 is the Charge relay system of the active site.

The protein belongs to the peptidase S1 family. In terms of assembly, interacts with SERPINA1. Ca(2+) is required as a cofactor. Occurs in a single-chain form and a two-chain form, produced by proteolytic cleavage after Arg-122. Post-translationally, sulfation at Tyr-154 increases selectivity towards basic versus apolar residues at the P2' position of inhibitors that bind in a substrate-like fashion. Although the increase in selectivity is relatively small, it may facilitate digestion of a broader range of dietary proteins.

The protein localises to the secreted. It localises to the extracellular space. The catalysed reaction is Preferential cleavage: Arg-|-Xaa, Lys-|-Xaa.. Its function is as follows. Has activity against the synthetic substrates Boc-Phe-Ser-Arg-Mec, Boc-Leu-Thr-Arg-Mec, Boc-Gln-Ala-Arg-Mec and Boc-Val-Pro-Arg-Mec. The single-chain form is more active than the two-chain form against all of these substrates. The chain is Serine protease 1 from Homo sapiens (Human).